The primary structure comprises 105 residues: UPF0145 protein lpp0255 (105 aa).

It belongs to the UPF0145 family.

The sequence is that of UPF0145 protein lpp0255 from Legionella pneumophila (strain Paris).